A 260-amino-acid chain; its full sequence is Hydroxyethylthiazole kinase 2 (260 aa).

Met-40 serves as a coordination point for substrate. The ATP site is built by Arg-116 and Thr-161. Residue Ala-188 participates in substrate binding.

The protein belongs to the Thz kinase family. Requires Mg(2+) as cofactor.

The enzyme catalyses 5-(2-hydroxyethyl)-4-methylthiazole + ATP = 4-methyl-5-(2-phosphooxyethyl)-thiazole + ADP + H(+). It functions in the pathway cofactor biosynthesis; thiamine diphosphate biosynthesis; 4-methyl-5-(2-phosphoethyl)-thiazole from 5-(2-hydroxyethyl)-4-methylthiazole: step 1/1. Functionally, catalyzes the phosphorylation of the hydroxyl group of 4-methyl-5-beta-hydroxyethylthiazole (THZ). This Oceanobacillus iheyensis (strain DSM 14371 / CIP 107618 / JCM 11309 / KCTC 3954 / HTE831) protein is Hydroxyethylthiazole kinase 2.